The following is an 89-amino-acid chain: MTSEFHNEDQTGFTDKRQLELAVETAQKTTGAATRGQSKTLVDSAYQAIEDARELSQSEELAALDDPEFVKQQQQLLDDSEHQLDEFKE.

This is an uncharacterized protein from Bacillus subtilis (strain 168).